Consider the following 230-residue polypeptide: Fibrillarin-like rRNA/tRNA 2'-O-methyltransferase (230 aa).

Residues 87-88, 105-106, 130-131, and 150-153 each bind S-adenosyl-L-methionine; these read TT, EY, DA, and DVAQ.

As to quaternary structure, interacts with nop5. Component of box C/D small ribonucleoprotein (sRNP) particles that contain rpl7ae, FlpA and nop5, plus a guide RNA.

In terms of biological role, involved in pre-rRNA and tRNA processing. Utilizes the methyl donor S-adenosyl-L-methionine to catalyze the site-specific 2'-hydroxyl methylation of ribose moieties in rRNA and tRNA. Site specificity is provided by a guide RNA that base pairs with the substrate. Methylation occurs at a characteristic distance from the sequence involved in base pairing with the guide RNA. This Methanocaldococcus jannaschii (strain ATCC 43067 / DSM 2661 / JAL-1 / JCM 10045 / NBRC 100440) (Methanococcus jannaschii) protein is Fibrillarin-like rRNA/tRNA 2'-O-methyltransferase.